A 496-amino-acid chain; its full sequence is Protein RepS (496 aa).

Residues 120–141 mediate DNA binding; it reads SDILTTAIDLGFMPTLIIKSDK.

Essential for replication. The sequence is that of Protein RepS (repS) from Streptococcus pyogenes.